The chain runs to 453 residues: Ribulose bisphosphate carboxylase large chain (453 aa).

Residues 1-2 (MS) constitute a propeptide that is removed on maturation. Residue proline 3 is modified to N-acetylproline. Residue lysine 14 is modified to N6,N6,N6-trimethyllysine. Substrate is bound by residues asparagine 123 and threonine 173. Catalysis depends on lysine 175, which acts as the Proton acceptor. Residue lysine 177 coordinates substrate. 3 residues coordinate Mg(2+): lysine 201, aspartate 203, and glutamate 204. Position 201 is an N6-carboxylysine (lysine 201). The active-site Proton acceptor is the histidine 294. Substrate-binding residues include arginine 295, histidine 327, and serine 379.

It belongs to the RuBisCO large chain family. Type I subfamily. As to quaternary structure, heterohexadecamer of 8 large chains and 8 small chains; disulfide-linked. The disulfide link is formed within the large subunit homodimers. Requires Mg(2+) as cofactor. Post-translationally, the disulfide bond which can form in the large chain dimeric partners within the hexadecamer appears to be associated with oxidative stress and protein turnover.

The protein localises to the plastid. It is found in the chloroplast. The catalysed reaction is 2 (2R)-3-phosphoglycerate + 2 H(+) = D-ribulose 1,5-bisphosphate + CO2 + H2O. It carries out the reaction D-ribulose 1,5-bisphosphate + O2 = 2-phosphoglycolate + (2R)-3-phosphoglycerate + 2 H(+). RuBisCO catalyzes two reactions: the carboxylation of D-ribulose 1,5-bisphosphate, the primary event in carbon dioxide fixation, as well as the oxidative fragmentation of the pentose substrate in the photorespiration process. Both reactions occur simultaneously and in competition at the same active site. The sequence is that of Ribulose bisphosphate carboxylase large chain from Asperula laevigata (Smooth woodruff).